Consider the following 1170-residue polypeptide: Thrombospondin-1 (1170 aa).

The N-terminal stretch at 1–18 is a signal peptide; sequence MGLAWGLGVLFLMHVCGT. The heparin-binding stretch occupies residues 47 to 95; it reads RLVKGPDPSSPAFRIEDANLIPPVPDDKFQDLVDAVRAEKGFLLLASLR. One can recognise a Laminin G-like domain in the interval 65-270; it reads NLIPPVPDDK…HKTKDLQAIC (206 aa). A disulfide bond links cysteine 171 and cysteine 232. N-linked (GlcNAc...) asparagine glycosylation is found at asparagine 248 and asparagine 360. Positions 316 to 373 constitute a VWFC domain; it reads PLCYHNGVQYRNNEEWTVDSCTECHCQNSVTICKKVSCPIMPCSNATVPDGECCPRCW. 3 consecutive TSP type-1 domains span residues 379–429, 435–490, and 492–547; these read DDGW…QECD, DGGW…DACP, and NGGW…QDCP. Residue tryptophan 385 is glycosylated (C-linked (Man) tryptophan). Intrachain disulfides connect cysteine 391-cysteine 423, cysteine 395-cysteine 428, and cysteine 406-cysteine 413. A glycan (O-linked (Fuc...) serine) is linked at serine 394. C-linked (Man) tryptophan glycans are attached at residues tryptophan 438 and tryptophan 441. Cystine bridges form between cysteine 447–cysteine 484, cysteine 451–cysteine 489, and cysteine 462–cysteine 474. Residue threonine 450 is glycosylated (O-linked (Fuc...) threonine). Tryptophan 498 is a glycosylation site (C-linked (Man) tryptophan). 21 cysteine pairs are disulfide-bonded: cysteine 504-cysteine 541, cysteine 508-cysteine 546, cysteine 519-cysteine 531, cysteine 551-cysteine 562, cysteine 556-cysteine 572, cysteine 575-cysteine 586, cysteine 592-cysteine 608, cysteine 599-cysteine 617, cysteine 620-cysteine 644, cysteine 650-cysteine 663, cysteine 657-cysteine 676, cysteine 678-cysteine 689, cysteine 705-cysteine 713, cysteine 718-cysteine 738, cysteine 754-cysteine 774, cysteine 777-cysteine 797, cysteine 813-cysteine 833, cysteine 836-cysteine 856, cysteine 874-cysteine 894, cysteine 910-cysteine 930, and cysteine 946-cysteine 1167. O-linked (Fuc...) threonine glycosylation occurs at threonine 507. The involved in retention in extracellular matrix (ECM); involved in trimer formation stretch occupies residues 531–1152; that stretch reads CVGDVTENQI…YAGGRLGLFV (622 aa). The region spanning 547–587 is the EGF-like 1 domain; the sequence is PIDGCLSNPCFAGVKCTSYPDGSWKCGACPPGYSGNGIQCT. A glycan (O-linked (Xyl) serine) is linked at serine 553. An EGF-like 2 domain is found at 646 to 690; sequence PRNPCTDGTHDCNKNAKCNYLGHYSDPMYRCECKPGYAGNGIICG. TSP type-3 repeat units follow at residues 691–726, 727–762, 763–785, 786–821, 822–844, 845–882, 883–918, and 919–954; these read EDTD…NSGQ, EDYD…NPAQ, YDYD…NPDQ, ADTD…NVDQ, RDTD…NPDQ, LDSD…NANQ, ADHD…NPDQ, and KDSD…DISE. An N-linked (GlcNAc...) asparagine glycan is attached at asparagine 708. The disordered stretch occupies residues 839–934; the sequence is EHNPDQLDSD…GRGDACKDDF (96 aa). 3 stretches are compositionally biased toward basic and acidic residues: residues 840–854, 883–894, and 917–934; these read HNPD…RIGD, ADHDKDGKGDAC, and DQKD…KDDF. The short motif at 926-928 is the Cell attachment site element; it reads RGD. One can recognise a TSP C-terminal domain in the interval 958–1170; sequence RRFQMIPLDP…SDLKYECRDP (213 aa). An N-linked (GlcNAc...) asparagine glycan is attached at asparagine 1067.

This sequence belongs to the thrombospondin family. In terms of assembly, homotrimer; disulfide-linked. Can bind to fibrinogen, fibronectin, laminin, type V collagen and integrins alpha-V/beta-1, alpha-V/beta-3 and alpha-IIb/beta-3. Binds heparin. Interacts (via the C-terminal domain) with CD47. Interacts (via the TSP type I repeats) with CD36; the interaction conveys an antiangiogenic effect. Interacts (via the TSP type I repeats) with HRG; the interaction blocks the antiangiogenic effect of THBS1 with CD36. Interacts with ATF6 (via lumenal domain). Interacts with FN1; this interaction is enhanced by TNFAIP6, which may act as a bridging molecule between FN1 and THBS1. Interacts with SIRPA; the interaction stimulates phosphorylation of SIRPA. As to expression, expressed by platelets (at protein level). Expressed by monocyte-derived immature and mature dendritic cells (at protein level).

It localises to the secreted. It is found in the cell surface. The protein localises to the extracellular space. Its subcellular location is the extracellular matrix. The protein resides in the endoplasmic reticulum. It localises to the sarcoplasmic reticulum. In terms of biological role, adhesive glycoprotein that mediates cell-to-cell and cell-to-matrix interactions. Multifunctional, involved in inflammation, angiogenesis, wound healing, reactive oxygen species (ROS) signaling, nitrous oxide (NO) signaling, apoptosis, senescence, aging, cellular self-renewal, stemness, and cardiovascular and metabolic homeostasis. Negatively modulates dendritic cell activation and cytokine release, as part of an autocrine feedback loop, contributing to the resolution of inflammation and immune homeostasis. Ligand for receptor CD47. Modulates nitrous oxide (NO) signaling via CD47, hence playing a role as a pressor agent, supporting blood pressure. Plays a role in endothelial cell senescence, acting via CD47, by increasing the abundance and activation of NADPH oxidase NOX1, and so generating excess ROS. Inhibits stem cell self-renewal, acting via CD47 signaling, probably by regulation of the stem cell transcription factors POU5F1/OCT4, SOX2, MYC/c-Myc and KLF4. Negatively modulates wound healing, acting via CD47. Ligand for receptor CD36. Involved in inducing apoptosis in podocytes in response to elevated free fatty acids, acting via CD36. Plays a role in suppressing angiogenesis, acting, depending on context, via CD36 or CD47. Promotes cellular senescence in a TP53-CDKN1A-RB1 signaling-dependent manner. Ligand for immunoglobulin-like cell surface receptor SIRPA. Involved in ROS signaling in non-phagocytic cells, stimulating NADPH oxidase-derived ROS production, acting via interaction with SIRPA. Plays a role in metabolic dysfunction in diet-induced obesity, perhaps acting by exacerbating adipose inflammatory activity; its effects may be mediated, at least in part, through enhanced adipocyte proliferation. Plays a role in ER stress response, via its interaction with the activating transcription factor 6 alpha (ATF6) which produces adaptive ER stress response factors. May be involved in age-related conditions, including metabolic dysregulation, during normal aging. This chain is Thrombospondin-1, found in Homo sapiens (Human).